The sequence spans 501 residues: L-arabinose isomerase (501 aa).

Residues glutamate 306, glutamate 333, histidine 350, and histidine 450 each contribute to the Mn(2+) site.

It belongs to the arabinose isomerase family. Homohexamer. The cofactor is Mn(2+).

It catalyses the reaction beta-L-arabinopyranose = L-ribulose. Its pathway is carbohydrate degradation; L-arabinose degradation via L-ribulose; D-xylulose 5-phosphate from L-arabinose (bacterial route): step 1/3. Its function is as follows. Catalyzes the conversion of L-arabinose to L-ribulose. The protein is L-arabinose isomerase of Pectobacterium carotovorum subsp. carotovorum (strain PC1).